The following is a 269-amino-acid chain: Neurotrophic factor BDNF precursor form (269 aa).

The signal sequence occupies residues 1–18 (MTILFLTMVISYFSCMRA). A propeptide spanning residues 19–150 (APLRDAPGMR…AANMSMRVRR (132 aa)) is cleaved from the precursor. Disordered regions lie at residues 39-61 (AATA…REEL) and 82-104 (AAHV…VATA). N-linked (GlcNAc...) asparagine glycosylation occurs at N143. 3 disulfides stabilise this stretch: C163–C230, C208–C259, and C218–C261.

This sequence belongs to the NGF-beta family.

Functionally, BDNF promotes the survival of neuronal populations that are all located either in the central nervous system or directly connected to it. This chain is Neurotrophic factor BDNF precursor form (bdnf), found in Xiphophorus maculatus (Southern platyfish).